The chain runs to 281 residues: Fructose-bisphosphate aldolase class 1 (281 aa).

The active-site Schiff-base intermediate with dihydroxyacetone-P is K191.

The protein belongs to the DeoC/FbaB aldolase family. In terms of assembly, homooctamer.

Its subcellular location is the cytoplasm. It catalyses the reaction beta-D-fructose 1,6-bisphosphate = D-glyceraldehyde 3-phosphate + dihydroxyacetone phosphate. With respect to regulation, activated by citrate. The protein is Fructose-bisphosphate aldolase class 1 (fba) of Pyrococcus abyssi (strain GE5 / Orsay).